The sequence spans 209 residues: Uracil phosphoribosyltransferase (209 aa).

Residues Arg-79, Arg-104, and 131 to 139 (DPMLATGGS) contribute to the 5-phospho-alpha-D-ribose 1-diphosphate site. Residues Val-194 and 199 to 201 (GDA) each bind uracil. Asp-200 provides a ligand contact to 5-phospho-alpha-D-ribose 1-diphosphate.

This sequence belongs to the UPRTase family. The cofactor is Mg(2+).

It catalyses the reaction UMP + diphosphate = 5-phospho-alpha-D-ribose 1-diphosphate + uracil. It participates in pyrimidine metabolism; UMP biosynthesis via salvage pathway; UMP from uracil: step 1/1. With respect to regulation, allosterically activated by GTP. Functionally, catalyzes the conversion of uracil and 5-phospho-alpha-D-ribose 1-diphosphate (PRPP) to UMP and diphosphate. The sequence is that of Uracil phosphoribosyltransferase from Bacillus cereus (strain Q1).